The chain runs to 150 residues: MQVIFLNDVRGKGKRGQIKNVPDGYAQNFLIKKGLAKEATKAAINTLKAEQKSEAARAAEELAEAKQVKTVLEADETVVELKAKAGTDGRLFGSIPSKQIATALADQYQVKLDKRKIELPEPIRVLGYTNVPVKLHPEVTAKIRVHVVEK.

This sequence belongs to the bacterial ribosomal protein bL9 family.

In terms of biological role, binds to the 23S rRNA. The polypeptide is Large ribosomal subunit protein bL9 (Lactiplantibacillus plantarum (strain ATCC BAA-793 / NCIMB 8826 / WCFS1) (Lactobacillus plantarum)).